The following is an 854-amino-acid chain: Alkaline phosphatase-like protein PglZ (854 aa).

Belongs to the alkaline phosphatase superfamily.

Functionally, BREX systems (bacteriophage exclusion) provide immunity against bacteriophage. A core protein of a type 1 BREX system. This system allows phage adsorption but prevents phage DNA replication, without degradation of the phage DNA. Methylation of bacterial DNA by PglX probably guides self/non-self discrimination. When the brxA-brxB-brxC-pglX and pglZ-brxL operons are transformed into a susceptible B.subtilis strain (BEST7003) they confer resistance to bacteriophages SPbeta, SP16, Zeta, phi3T and SP02 and partial protection to phages SP01 and SP82G (these include lytic and temperate phage). They do not protect against phages phi105, rho10 or rho14. Additionally confers a very slight reduction in efficiency of plasmid transformation. In Bacillus cereus (strain H3081.97), this protein is Alkaline phosphatase-like protein PglZ.